Here is a 409-residue protein sequence, read N- to C-terminus: 8-amino-7-oxononanoate synthase (409 aa).

Substrate is bound at residue Arg20. Residue 116-117 (GY) coordinates pyridoxal 5'-phosphate. Position 141 (His141) interacts with substrate. Positions 187, 215, and 243 each coordinate pyridoxal 5'-phosphate. Residue Lys246 is modified to N6-(pyridoxal phosphate)lysine. Substrate is bound at residue Thr369.

This sequence belongs to the class-II pyridoxal-phosphate-dependent aminotransferase family. BioF subfamily. Homodimer. The cofactor is pyridoxal 5'-phosphate.

The enzyme catalyses 6-carboxyhexanoyl-[ACP] + L-alanine + H(+) = (8S)-8-amino-7-oxononanoate + holo-[ACP] + CO2. The protein operates within cofactor biosynthesis; biotin biosynthesis. Catalyzes the decarboxylative condensation of pimeloyl-[acyl-carrier protein] and L-alanine to produce 8-amino-7-oxononanoate (AON), [acyl-carrier protein], and carbon dioxide. The protein is 8-amino-7-oxononanoate synthase of Polaromonas naphthalenivorans (strain CJ2).